The following is a 359-amino-acid chain: DNA replication and repair protein RecF (359 aa).

Residue 30-37 participates in ATP binding; that stretch reads GQNAQGKT.

It belongs to the RecF family.

The protein localises to the cytoplasm. Its function is as follows. The RecF protein is involved in DNA metabolism; it is required for DNA replication and normal SOS inducibility. RecF binds preferentially to single-stranded, linear DNA. It also seems to bind ATP. This is DNA replication and repair protein RecF from Lactococcus lactis subsp. cremoris (strain SK11).